The sequence spans 340 residues: GTPase Obg (340 aa).

The 159-residue stretch at 1–159 folds into the Obg domain; it reads MKFLDQAKVY…RTLWLRLKLI (159 aa). In terms of domain architecture, OBG-type G spans 160–327; it reads ADAGIIGLPN…LLRAGAHIIE (168 aa). GTP contacts are provided by residues 166 to 173, 191 to 195, 212 to 215, 279 to 282, and 308 to 310; these read GLPNAGKS, FTTLY, DIPG, SQID, and SAV. Mg(2+) is bound by residues Ser173 and Thr193.

It belongs to the TRAFAC class OBG-HflX-like GTPase superfamily. OBG GTPase family. Monomer. It depends on Mg(2+) as a cofactor.

The protein localises to the cytoplasm. Functionally, an essential GTPase which binds GTP, GDP and possibly (p)ppGpp with moderate affinity, with high nucleotide exchange rates and a fairly low GTP hydrolysis rate. Plays a role in control of the cell cycle, stress response, ribosome biogenesis and in those bacteria that undergo differentiation, in morphogenesis control. In Bartonella henselae (strain ATCC 49882 / DSM 28221 / CCUG 30454 / Houston 1) (Rochalimaea henselae), this protein is GTPase Obg.